Reading from the N-terminus, the 632-residue chain is Putative ferric transport system permease protein FbpB 1 (632 aa).

The next 15 helical transmembrane spans lie at 5 to 25 (SFNL…LPLL), 37 to 57 (LFLT…YKIS), 58 to 78 (MGYS…LSLA), 93 to 113 (LLCI…AIFV), 144 to 164 (LFLS…FALY), 178 to 198 (IFSI…VTLM), 223 to 243 (GFNG…FMIL), 270 to 290 (YQII…IVFI), 299 to 319 (PLVL…YIAG), 330 to 350 (LGSM…IWIG), 377 to 397 (IIGM…SIFY), 436 to 456 (IYAG…AYIV), 469 to 489 (FLTM…YILA), 490 to 510 (FNNA…SMVM), and 547 to 567 (CFIV…TSFV). In terms of domain architecture, ABC transmembrane type-1 1 spans 140 to 345 (ITNSLFLSGF…IFSLAIFIIQ (206 aa)). An ABC transmembrane type-1 2 domain is found at 431 to 632 (LINTLIYAGI…DCRRYAYFPF (202 aa)).

This sequence belongs to the binding-protein-dependent transport system permease family. FbpB subfamily. The complex is composed of two ATP-binding proteins (FbpC), two transmembrane proteins (FbpB) and a solute-binding protein (FbpA).

The protein localises to the cell inner membrane. In terms of biological role, part of the ABC transporter complex FbpABC (TC 3.A.1.10.1) involved in Fe(3+) ions import. Probably responsible for the translocation of the substrate across the membrane. In Haemophilus influenzae (strain ATCC 51907 / DSM 11121 / KW20 / Rd), this protein is Putative ferric transport system permease protein FbpB 1 (fbpB1).